Here is a 330-residue protein sequence, read N- to C-terminus: Small ribosomal subunit protein mS35 (330 aa).

The interval A50–M73 is disordered. Basic and acidic residues predominate over residues Q64–M73.

It belongs to the mitochondrion-specific ribosomal protein mS35 family. Component of the mitochondrial ribosome small subunit (28S) which comprises a 12S rRNA and about 30 distinct proteins.

Its subcellular location is the mitochondrion. This Danio rerio (Zebrafish) protein is Small ribosomal subunit protein mS35 (mrps35).